Consider the following 135-residue polypeptide: Probable 5-hydroxyisourate hydrolase R09H10.3 (135 aa).

The first 20 residues, 1 to 20, serve as a signal peptide directing secretion; sequence MNKFSLFFALTATLMTITES. The substrate site is built by His30, Arg68, and Tyr132.

This sequence belongs to the transthyretin family. 5-hydroxyisourate hydrolase subfamily. Homotetramer.

The enzyme catalyses 5-hydroxyisourate + H2O = 5-hydroxy-2-oxo-4-ureido-2,5-dihydro-1H-imidazole-5-carboxylate + H(+). Its function is as follows. Catalyzes the hydrolysis of 5-hydroxyisourate (HIU) to 2-oxo-4-hydroxy-4-carboxy-5-ureidoimidazoline (OHCU). The protein is Probable 5-hydroxyisourate hydrolase R09H10.3 of Caenorhabditis elegans.